A 182-amino-acid polypeptide reads, in one-letter code: Fatty-acid and retinol-binding protein 1 (182 aa).

An N-terminal signal peptide occupies residues 1–17 (MIRATIILAAVAALAFS). The stretch at 86-106 (EKASKLHQIVKDKVNALNDEA) forms a coiled coil.

It belongs to the fatty-acid and retinol-binding protein (FARBP) family.

The protein localises to the secreted. Functionally, probably binds lipids. The polypeptide is Fatty-acid and retinol-binding protein 1 (far-1) (Caenorhabditis elegans).